Consider the following 542-residue polypeptide: Heterogeneous nuclear ribonucleoprotein L-like (542 aa).

Residues 1-71 (MSSSSSSPRE…QPEAGGSHHK (71 aa)) form a disordered region. Residues 18-29 (YESQAKRLKTEE) show a composition bias toward basic and acidic residues. K26 is covalently cross-linked (Glycyl lysine isopeptide (Lys-Gly) (interchain with G-Cter in SUMO2)). At S35 the chain carries Phosphoserine. T46 carries the phosphothreonine modification. The segment covering 48–58 (RGGGDGGGGGR) has biased composition (gly residues). Phosphoserine occurs at positions 59, 68, and 75. RRM domains lie at 76–150 (PVVH…YSTS), 166–244 (NKVL…YARP), and 335–409 (SVVM…VSKQ). Residue K491 forms a Glycyl lysine isopeptide (Lys-Gly) (interchain with G-Cter in SUMO2) linkage.

Interacts with HNRNPL. As to expression, widely expressed. Detected in bone marrow stroma cells, skeletal muscle, heart, placenta, pancreas, kidney and lung.

In terms of biological role, RNA-binding protein that functions as a regulator of alternative splicing for multiple target mRNAs, including PTPRC/CD45 and STAT5A. Required for alternative splicing of PTPRC. This is Heterogeneous nuclear ribonucleoprotein L-like (HNRNPLL) from Homo sapiens (Human).